The primary structure comprises 253 residues: 5'-nucleotidase SurE (253 aa).

A divalent metal cation contacts are provided by Asp-8, Asp-9, Ser-39, and Asn-95.

It belongs to the SurE nucleotidase family. The cofactor is a divalent metal cation.

It localises to the cytoplasm. The catalysed reaction is a ribonucleoside 5'-phosphate + H2O = a ribonucleoside + phosphate. Its function is as follows. Nucleotidase that shows phosphatase activity on nucleoside 5'-monophosphates. The chain is 5'-nucleotidase SurE from Desulfatibacillum aliphaticivorans.